Consider the following 581-residue polypeptide: Probable CDP-diacylglycerol--glycerol-3-phosphate 3-phosphatidyltransferase (581 aa).

The tract at residues 27 to 65 (RSATTTTTTTTKACGNGSSQSPPSTPLLSSKSSTITSNK) is disordered. Positions 44–65 (SSQSPPSTPLLSSKSSTITSNK) are enriched in low complexity. 160–167 (ASLYLGTS) provides a ligand contact to ATP. PLD phosphodiesterase domains follow at residues 248–274 (TIGV…SKDY) and 487–520 (DKWT…GSRS). Residues His253, Lys255, and Asp260 contribute to the active site.

Belongs to the CDP-alcohol phosphatidyltransferase class-II family.

The catalysed reaction is a CDP-1,2-diacyl-sn-glycerol + sn-glycerol 3-phosphate = a 1,2-diacyl-sn-glycero-3-phospho-(1'-sn-glycero-3'-phosphate) + CMP + H(+). It participates in phospholipid metabolism; phosphatidylglycerol biosynthesis; phosphatidylglycerol from CDP-diacylglycerol: step 1/2. Functionally, functions in the biosynthesis of the anionic phospholipids phosphatidylglycerol and cardiolipin. This Dictyostelium discoideum (Social amoeba) protein is Probable CDP-diacylglycerol--glycerol-3-phosphate 3-phosphatidyltransferase (pgs1).